The chain runs to 404 residues: MKIPIYMDYHATTPVDPRVLEAMLPYFTTEYGNAASKSHAFGWKAEEAVEAAREEVAKLIGASAKEIVWTSGATESDNLAVKGAAHFYQAKGKHLVTCKTEHKAVLDSMHALERQGFEVTFLEPERDGRLDPAKVKAALRPDTILVSVMHANNETGVVHPIAEIGRIAREAGVVFHCDAVQSIGKIPFDVEAMNVDLASISAHKMYGPKGVGALYVRRKPRVRLVAEMDGGGHERGFRSGTLNVPGIVGMGKAAELARLERDAEAVRVTALRERLRKGLEQELDLLTVNGSLEHRVPGNLNVSFAYVEGEALMMAVKDVAVSSGSACTSASLEPSYVLRAMGVSEDLAHSSIRFGLGRFSTEEEVDYAIRLFGEKVRKLREMSPLYEMVKDGVDLNQIEWANPH.

Pyridoxal 5'-phosphate contacts are provided by residues 73 to 74, N153, Q181, and 201 to 203; these read AT and SAH. At K204 the chain carries N6-(pyridoxal phosphate)lysine. T241 contributes to the pyridoxal 5'-phosphate binding site. Catalysis depends on C327, which acts as the Cysteine persulfide intermediate. Residue C327 participates in [2Fe-2S] cluster binding.

It belongs to the class-V pyridoxal-phosphate-dependent aminotransferase family. NifS/IscS subfamily. In terms of assembly, homodimer. Forms a heterotetramer with IscU, interacts with other sulfur acceptors. Requires pyridoxal 5'-phosphate as cofactor.

Its subcellular location is the cytoplasm. The enzyme catalyses (sulfur carrier)-H + L-cysteine = (sulfur carrier)-SH + L-alanine. It participates in cofactor biosynthesis; iron-sulfur cluster biosynthesis. Functionally, master enzyme that delivers sulfur to a number of partners involved in Fe-S cluster assembly, tRNA modification or cofactor biosynthesis. Catalyzes the removal of elemental sulfur atoms from cysteine to produce alanine. Functions as a sulfur delivery protein for Fe-S cluster synthesis onto IscU, an Fe-S scaffold assembly protein, as well as other S acceptor proteins. In Anaeromyxobacter dehalogenans (strain 2CP-C), this protein is Cysteine desulfurase IscS.